The chain runs to 150 residues: D-aminoacyl-tRNA deacylase (150 aa).

A Gly-cisPro motif, important for rejection of L-amino acids motif is present at residues 138–139 (GP).

The protein belongs to the DTD family. Homodimer.

Its subcellular location is the cytoplasm. The enzyme catalyses glycyl-tRNA(Ala) + H2O = tRNA(Ala) + glycine + H(+). It carries out the reaction a D-aminoacyl-tRNA + H2O = a tRNA + a D-alpha-amino acid + H(+). In terms of biological role, an aminoacyl-tRNA editing enzyme that deacylates mischarged D-aminoacyl-tRNAs. Also deacylates mischarged glycyl-tRNA(Ala), protecting cells against glycine mischarging by AlaRS. Acts via tRNA-based rather than protein-based catalysis; rejects L-amino acids rather than detecting D-amino acids in the active site. By recycling D-aminoacyl-tRNA to D-amino acids and free tRNA molecules, this enzyme counteracts the toxicity associated with the formation of D-aminoacyl-tRNA entities in vivo and helps enforce protein L-homochirality. The chain is D-aminoacyl-tRNA deacylase from Chromobacterium violaceum (strain ATCC 12472 / DSM 30191 / JCM 1249 / CCUG 213 / NBRC 12614 / NCIMB 9131 / NCTC 9757 / MK).